A 780-amino-acid chain; its full sequence is ATP-dependent 6-phosphofructokinase, muscle type (780 aa).

T2 carries the post-translational modification N-acetylthreonine. The tract at residues 2–390 is N-terminal catalytic PFK domain 1; it reads THEEHHAART…NWEVYKLLAH (389 aa). Residues G25, 88–89, and 118–121 contribute to the ATP site; these read RC and GDGS. Mg(2+) is bound at residue D119. Phosphoserine is present on S133. Residues 164-166, R201, 208-210, E264, R292, and 298-301 contribute to the substrate site; these read SID, MGR, and HVQR. D166 acts as the Proton acceptor in catalysis. S377 bears the Phosphoserine mark. Residues 391–401 are interdomain linker; that stretch reads IRPPAPKSGSY. The interval 402-780 is C-terminal regulatory PFK domain 2; it reads TVAVMNVGAP…SRKRSGEATV (379 aa). Residues R471 and 528 to 532 contribute to the beta-D-fructose 2,6-bisphosphate site; that span reads TVSNN. An O-linked (GlcNAc) serine glycan is attached at S530. The residue at position 557 (K557) is an N6-(2-hydroxyisobutyryl)lysine. Beta-D-fructose 2,6-bisphosphate is bound by residues R566, 573-575, E629, R655, and 661-664; these read MGG and HMQQ. S667 carries the post-translational modification Phosphoserine. A beta-D-fructose 2,6-bisphosphate-binding site is contributed by R735. The residue at position 775 (S775) is a Phosphoserine; by PKA.

Belongs to the phosphofructokinase type A (PFKA) family. ATP-dependent PFK group I subfamily. Eukaryotic two domain clade 'E' sub-subfamily. Homo- and heterotetramers. Phosphofructokinase (PFK) enzyme functions as a tetramer composed of different combinations of 3 types of subunits, called PFKM (M), PFKL (L) and PFKP (P). The composition of the PFK tetramer differs according to the tissue type it is present in. The kinetic and regulatory properties of the tetrameric enzyme are dependent on the subunit composition, hence can vary across tissues. Interacts (via C-terminus) with HK1 (via N-terminal spermatogenic cell-specific region). Mg(2+) serves as cofactor. Post-translationally, glcNAcylation decreases enzyme activity.

Its subcellular location is the cytoplasm. It carries out the reaction beta-D-fructose 6-phosphate + ATP = beta-D-fructose 1,6-bisphosphate + ADP + H(+). The protein operates within carbohydrate degradation; glycolysis; D-glyceraldehyde 3-phosphate and glycerone phosphate from D-glucose: step 3/4. Allosterically activated by ADP, AMP, or fructose 2,6-bisphosphate, and allosterically inhibited by ATP or citrate. Catalyzes the phosphorylation of D-fructose 6-phosphate to fructose 1,6-bisphosphate by ATP, the first committing step of glycolysis. In Oryctolagus cuniculus (Rabbit), this protein is ATP-dependent 6-phosphofructokinase, muscle type (PFKM).